A 380-amino-acid chain; its full sequence is Cytochrome b (380 aa).

The next 4 helical transmembrane spans lie at 33–53 (FGSLLGLCLATQILTGLFLAM), 77–98 (WLIRNIHANGASFFFICIYMHI), 113–133 (WNIGVVLLLLTMMTAFVGYVL), and 178–198 (FFAFHFLFPFVIAAATVLHLL). Residues histidine 83 and histidine 97 each contribute to the heme b site. Histidine 182 and histidine 196 together coordinate heme b. Position 201 (histidine 201) interacts with a ubiquinone. 4 helical membrane passes run 226 to 246 (YKDLLGFVAMLLGLTSLALFA), 288 to 308 (LGGVLALLFSILVLMVVPILH), 320 to 340 (LTQFLFWTLVADMLILTWIGG), and 347 to 367 (FIIIGQIASVIYFTIFLVLAP).

Belongs to the cytochrome b family. As to quaternary structure, the cytochrome bc1 complex contains 3 respiratory subunits (MT-CYB, CYC1 and UQCRFS1), 2 core proteins (UQCRC1 and UQCRC2) and probably 6 low-molecular weight proteins. Heme b serves as cofactor.

The protein localises to the mitochondrion inner membrane. In terms of biological role, component of the ubiquinol-cytochrome c reductase complex (complex III or cytochrome b-c1 complex) that is part of the mitochondrial respiratory chain. The b-c1 complex mediates electron transfer from ubiquinol to cytochrome c. Contributes to the generation of a proton gradient across the mitochondrial membrane that is then used for ATP synthesis. The chain is Cytochrome b (mt-cyb) from Salmo salar (Atlantic salmon).